Reading from the N-terminus, the 243-residue chain is Probable 6-oxopurine nucleoside phosphorylase (243 aa).

Phosphate contacts are provided by residues T8 and R48 to H49. M174 is a binding site for substrate. T175 lines the phosphate pocket. N198–A200 contacts substrate.

This sequence belongs to the PNP/MTAP phosphorylase family. MTAP subfamily. In terms of assembly, homohexamer. Dimer of a homotrimer.

The catalysed reaction is a purine D-ribonucleoside + phosphate = a purine nucleobase + alpha-D-ribose 1-phosphate. It functions in the pathway purine metabolism; purine nucleoside salvage. Functionally, purine nucleoside phosphorylase which is highly specific for 6-oxopurine nucleosides. Cleaves guanosine or inosine to respective bases and sugar-1-phosphate molecules. Involved in purine salvage. The polypeptide is Probable 6-oxopurine nucleoside phosphorylase (Archaeoglobus fulgidus (strain ATCC 49558 / DSM 4304 / JCM 9628 / NBRC 100126 / VC-16)).